Here is a 274-residue protein sequence, read N- to C-terminus: Diaminopimelate epimerase (274 aa).

Substrate-binding residues include Asn11, Gln44, and Asn64. Cys73 functions as the Proton donor in the catalytic mechanism. Residues 74-75, Asn157, Asn190, and 208-209 contribute to the substrate site; these read GN and ER. Cys217 functions as the Proton acceptor in the catalytic mechanism. 218-219 is a binding site for substrate; that stretch reads GT.

Belongs to the diaminopimelate epimerase family. Homodimer.

It localises to the cytoplasm. It carries out the reaction (2S,6S)-2,6-diaminopimelate = meso-2,6-diaminopimelate. It functions in the pathway amino-acid biosynthesis; L-lysine biosynthesis via DAP pathway; DL-2,6-diaminopimelate from LL-2,6-diaminopimelate: step 1/1. In terms of biological role, catalyzes the stereoinversion of LL-2,6-diaminopimelate (L,L-DAP) to meso-diaminopimelate (meso-DAP), a precursor of L-lysine and an essential component of the bacterial peptidoglycan. The sequence is that of Diaminopimelate epimerase from Blochmanniella pennsylvanica (strain BPEN).